The chain runs to 433 residues: MSSEDRHLGSSCGSFIKTEPSSPSSGIDALSHHSPSGSSDASGGFGMALGTHANGLDSPPMFAGAGLGGNPCRKSYEDCTSGIMEDSAIKCEYMLNAIPKRLCLVCGDIASGYHYGVASCEACKAFFKRTIQGNIEYSCPATNECEITKRRRKSCQACRFMKCLKVGMLKEGVRLDRVRGGRQKYKRRLDSENSPYLSLQISPPAKKPLTKIVSYLLVAEPDKLYAMPPDDVPEGDIKALTTLCDLADRELVFLISWAKHIPGFSNLTLGDQMSLLQSAWMEILILGIVYRSLPYDDKLAYAEDYIMDEEHSRLVGLLELYRAILQLVRRYKKLKVEKEEFVMLKALALANSDSMYIENLEAVQKLQDLLHEALQDYELSQRHEEPRRAGKLLLTLPLLRQTAAKAVQHFYSVKLQGKVPMHKLFLEMLEAKV.

Residues 1–41 are disordered; that stretch reads MSSEDRHLGSSCGSFIKTEPSSPSSGIDALSHHSPSGSSDA. The segment covering 32–41 has biased composition (low complexity); that stretch reads HHSPSGSSDA. Residues 93 to 211 form an interaction with NANOG region; it reads YMLNAIPKRL…SPPAKKPLTK (119 aa). The nuclear receptor DNA-binding region spans 100–186; the sequence is KRLCLVCGDI…RVRGGRQKYK (87 aa). NR C4-type zinc fingers lie at residues 103-123 and 139-163; these read CLVC…CEAC and CPAT…FMKC. Positions 203–433 are essential for ESRRB transcriptional activity and interaction with NCOA3; it reads PPAKKPLTKI…LFLEMLEAKV (231 aa). An NR LBD domain is found at 208–432; it reads PLTKIVSYLL…KLFLEMLEAK (225 aa).

The protein belongs to the nuclear hormone receptor family. NR3 subfamily. Binds DNA as a monomer. Interacts with NR0B1; represses ESRRB activity at the GATA6 promoter. Interacts with NANOG; reciprocally modulates their transcriptional activities and activates POU5F1 expression. Interacts with NCOA3; mediates the interaction between ESRRB and RNA polymerase II complexes and allows NCOA3 corecruitment to ESRRB, KLF4, NANOG, and SOX2 enhancer regions to trigger ESRRB-dependent gene activation involved in self-renewal and pluripotency. Interacts with KDM1A; co-occupes the core set of ESRRB targets including ELF5 and EOMES. Interacts with the multiprotein complex Integrator, at least composed of INTS1, INTS2, INTS3, INTS4, INTS5, INTS6, INTS7, INTS8, INTS9/RC74, INTS10, INTS11/CPSF3L and INTS12; ESRRB is probably not a core component of the integrator complex and associates to integrator via its interaction with INTS1 and INTS9; attracts the transcriptional machinery. Interacts with JARID2. Interacts with POU5F1; recruits ESRRB near the POU5F1-SOX2 element in the NANOG proximal promoter leading to activation of NANOG expression; the interaction is DNA independent. Acetylated by PCAF/KAT2 (in vitro).

Its subcellular location is the nucleus. The protein resides in the cytoplasm. It localises to the chromosome. Transcription factor that binds a canonical ESRRB recognition (ERRE) sequence 5'TCAAGGTCA-3' localized on promoter and enhancer of targets genes regulating their expression or their transcription activity. Plays a role, in a LIF independent manner, in maintainance of self-renewal and pluripotency of embryonic and trophoblast stem cells through different signaling pathways including FGF signaling pathway and Wnt signaling pathways. Involved in morula development (2-16 cells embryos) by acting as a regulator at the 8-cell stage. Upon FGF signaling pathway activation, interacts with KDM1A by directly binding to enhancer site of ELF5 and EOMES and activating their transcription leading to self-renewal of trophoblast stem cells. Also regulates expression of multiple rod-specific genes and is required for survival of this cell type. Plays a role as transcription factor activator of GATA6, NR0B1, POU5F1 and PERM1. Plays a role as transcription factor repressor of NFE2L2 transcriptional activity and ESR1 transcriptional activity. During mitosis remains bound to a subset of interphase target genes, including pluripotency regulators, through the canonical ESRRB recognition (ERRE) sequence, leading to their transcriptional activation in early G1 phase. Can coassemble on structured DNA elements with other transcription factors like SOX2, POU5F1, KDM1A and NCOA3 to trigger ESRRB-dependent gene activation. This mechanism, in the case of SOX2 corecruitment prevents the embryonic stem cells (ESCs) to epiblast stem cells (EpiSC) transition through positive regulation of NR0B1 that inhibits the EpiSC transcriptional program. Also plays a role inner ear development by controlling expression of ion channels and transporters and in early placentation. This is Steroid hormone receptor ERR2 from Rattus norvegicus (Rat).